Reading from the N-terminus, the 223-residue chain is Probable amino-acid ABC transporter permease protein PatM (223 aa).

Residues 19-210 (LGTTMEMATW…GVVVILTRVQ (192 aa)) enclose the ABC transmembrane type-1 domain. The next 5 helical transmembrane spans lie at 23 to 43 (MEMA…LANI), 59 to 78 (ISFF…YYGL), 90 to 110 (AFSA…AESI), 156 to 176 (FIDM…EIMA), and 186 to 206 (FRFF…VVIL).

Belongs to the binding-protein-dependent transport system permease family. HisMQ subfamily.

It localises to the cell inner membrane. Its function is as follows. Probably part of a binding-protein-dependent transport system for an amino acid. Probably responsible for the translocation of the substrate across the membrane. This Vibrio harveyi (Beneckea harveyi) protein is Probable amino-acid ABC transporter permease protein PatM (patM).